The following is a 315-amino-acid chain: Acetyl-coenzyme A carboxylase carboxyl transferase subunit alpha (315 aa).

The region spanning 38 to 292 is the CoA carboxyltransferase C-terminal domain; the sequence is RLQKKSNELT…KLRLKEDLAE (255 aa).

Belongs to the AccA family. In terms of assembly, acetyl-CoA carboxylase is a heterohexamer composed of biotin carboxyl carrier protein (AccB), biotin carboxylase (AccC) and two subunits each of ACCase subunit alpha (AccA) and ACCase subunit beta (AccD).

Its subcellular location is the cytoplasm. It carries out the reaction N(6)-carboxybiotinyl-L-lysyl-[protein] + acetyl-CoA = N(6)-biotinyl-L-lysyl-[protein] + malonyl-CoA. Its pathway is lipid metabolism; malonyl-CoA biosynthesis; malonyl-CoA from acetyl-CoA: step 1/1. Its function is as follows. Component of the acetyl coenzyme A carboxylase (ACC) complex. First, biotin carboxylase catalyzes the carboxylation of biotin on its carrier protein (BCCP) and then the CO(2) group is transferred by the carboxyltransferase to acetyl-CoA to form malonyl-CoA. The sequence is that of Acetyl-coenzyme A carboxylase carboxyl transferase subunit alpha from Haemophilus influenzae (strain PittEE).